Here is a 276-residue protein sequence, read N- to C-terminus: MNTETTSVRKFRSANIHIYGKCNYRCEHCFDRCLTKNYMRPSDWVDTLTFLKEYGVEKINLAGGEPTLYPFLDQMCYLVKGMGFKLSIVSNGSLITEDWMARMEGVVDWIGLSIDSIDEADEIQIGRGRGGHLENIVQVADMAHRHGIKVKLNITVVRRSWMKDFRPFIEKVRPERVKCFRALTLKNANDDVPDTWSITDKQFEDFRRRHEDIGCIVFEDNEDMVSSYVMFDPMGRWMVDSGYEKRFISFEVLRREGLDREVDVEKYFGRNAVYEW.

The Radical SAM core domain maps to 6 to 216 (TSVRKFRSAN…RRRHEDIGCI (211 aa)). Positions 22, 26, and 29 each coordinate [4Fe-4S] cluster.

It belongs to the radical SAM superfamily. Viperin family. [4Fe-4S] cluster is required as a cofactor.

It carries out the reaction CTP + AH2 + S-adenosyl-L-methionine = 3'-deoxy-3',4'-didehydro-CTP + 5'-deoxyadenosine + L-methionine + A + H2O + H(+). Functionally, expression of pVip50 in E.coli (strain MG1655) confers resistance to phage P1; has no effect against T7. Catalyzes the conversion of cytosine triphosphate (CTP) to 3'-deoxy-3',4'-didehydro-CTP (ddhCTP), probably via a SAM-dependent radical mechanism. The modified nucleotide represses transcription from T7 RNA polymerase-directed genes (possibly by acting as chain terminators), strongly suggesting these nucleotides block viral polymerase transcription. How this protein allows bacteria to resist viruses that do not encode their own RNA polymerase (such as lambda, P1) is unknown. The protein is S-adenosylmethionine-dependent nucleotide dehydratase of Thermoplasmatales archaeon (strain ISO4-H5).